Reading from the N-terminus, the 243-residue chain is MISLLQMKFHALLLLLSKVWTCICFMFNRQVRAFIQYQPVKYELFPLSPVSRHRLSLVQRKTLVLDLDETLIHSHHNAMPRNTVKPGTPHDFTVKVTIDRNPVRFFVHKRPHVDYFLDVVSQWYDLVVFTASMEIYGAAVADKLDNGRNILRRRYYRQHCTPDYGSYTKDLSAICSDLNRIFIIDNSPGAYRCFPNNAIPIKSWFSDPMDTALLSLLPMLDALRFTNDVRSVLSRNLHLHRLW.

Residues alanine 11–phenylalanine 27 traverse the membrane as a helical segment. An FCP1 homology domain is found at serine 56 to leucine 223.

The protein belongs to the dullard family.

The protein localises to the membrane. It carries out the reaction O-phospho-L-seryl-[protein] + H2O = L-seryl-[protein] + phosphate. The enzyme catalyses O-phospho-L-threonyl-[protein] + H2O = L-threonyl-[protein] + phosphate. In terms of biological role, serine/threonine protein phosphatase that may dephosphorylate and activate lipin-like phosphatases. Lipins are phosphatidate phosphatases that catalyze the conversion of phosphatidic acid to diacylglycerol and control the metabolism of fatty acids at different levels. May indirectly modulate the lipid composition of nuclear and/or endoplasmic reticulum membranes and be required for proper nuclear membrane morphology and/or dynamics. May also indirectly regulate the production of lipid droplets and triacylglycerol. The protein is CTD nuclear envelope phosphatase 1 homolog (l(1)G0269) of Drosophila pseudoobscura pseudoobscura (Fruit fly).